A 267-amino-acid chain; its full sequence is Tetrahydromethanopterin S-methyltransferase subunit C (267 aa).

The next 7 membrane-spanning stretches (helical) occupy residues 19 to 39 (IMAI…FMPA), 40 to 60 (QFSF…ADAV), 75 to 95 (IGMI…SVGG), 96 to 116 (IAGP…IGVL), 131 to 151 (AMVE…VVIA), 162 to 182 (YVVA…GILH), and 221 to 241 (GLMA…WAFM).

It belongs to the MtrC family. As to quaternary structure, the complex is composed of 8 subunits; MtrA, MtrB, MtrC, MtrD, MtrE, MtrF, MtrG and MtrH.

Its subcellular location is the cell membrane. The enzyme catalyses 5-methyl-5,6,7,8-tetrahydromethanopterin + coenzyme M + 2 Na(+)(in) = 5,6,7,8-tetrahydromethanopterin + methyl-coenzyme M + 2 Na(+)(out). It participates in one-carbon metabolism; methanogenesis from CO(2); methyl-coenzyme M from 5,10-methylene-5,6,7,8-tetrahydromethanopterin: step 2/2. Its function is as follows. Part of a complex that catalyzes the formation of methyl-coenzyme M and tetrahydromethanopterin from coenzyme M and methyl-tetrahydromethanopterin. This is an energy-conserving, sodium-ion translocating step. This chain is Tetrahydromethanopterin S-methyltransferase subunit C, found in Methanosarcina acetivorans (strain ATCC 35395 / DSM 2834 / JCM 12185 / C2A).